The chain runs to 209 residues: Max dimerization protein 4 (209 aa).

The interval 6-23 (LLILLEAAEYLERRDREA) is interaction with SIN3A and SIN3B. In terms of domain architecture, bHLH spans 53 to 105 (NNRSSHNELEKHRRAKLRLYLEQLKQLVPLGPDSTRHTTLSLLKRAKVHIKKL). The disordered stretch occupies residues 140–209 (RVRTDSTGSA…CRRLGRPALS (70 aa)). Residues 153–163 (DDSEQEVDIEG) show a composition bias toward acidic residues. Basic residues predominate over residues 199-209 (HCRRLGRPALS).

In terms of assembly, efficient DNA binding requires dimerization with another bHLH protein. Binds DNA as a heterodimer with MAX. Interacts with SIN3A AND SIN3B. Interacts with RNF17.

The protein resides in the nucleus. In terms of biological role, transcriptional repressor. Binds with MAX to form a sequence-specific DNA-binding protein complex which recognizes the core sequence 5'-CAC[GA]TG-3'. Antagonizes MYC transcriptional activity by competing for MAX and suppresses MYC dependent cell transformation. This Homo sapiens (Human) protein is Max dimerization protein 4 (MXD4).